We begin with the raw amino-acid sequence, 1117 residues long: Centrosomal protein of 126 kDa (1117 aa).

Residues 1 to 42 (MLAGRPGTRSAVGELGTESSDNLDRAPLGPRESGGHHRPGSY) are disordered. Residues 49-121 (LEKNLEEERQ…EEVTEKFQRA (73 aa)) adopt a coiled-coil conformation. Disordered stretches follow at residues 643-664 (AENS…QQFH) and 730-759 (KKEE…IIRK). Residues 730–744 (KKEESKIPVHDDSKT) are compositionally biased toward basic and acidic residues. Basic residues predominate over residues 745–758 (KQGKPQRGRAKIIR).

As to quaternary structure, interacts with DCTN1. As to expression, expressed in brain, lung, skeletal muscle, kidney, pancreas, testis and ovary.

Its subcellular location is the midbody. It localises to the cytoplasm. The protein localises to the cytoskeleton. It is found in the microtubule organizing center. The protein resides in the centrosome. Its subcellular location is the cilium basal body. Participates in cytokinesis. Necessary for microtubules and mitotic spindle organization. Involved in primary cilium formation. The chain is Centrosomal protein of 126 kDa from Homo sapiens (Human).